The primary structure comprises 211 residues: Ribosomal RNA small subunit methyltransferase G (211 aa).

Residues Gly73, Phe78, 124–125, and Arg137 contribute to the S-adenosyl-L-methionine site; that span reads VE.

The protein belongs to the methyltransferase superfamily. RNA methyltransferase RsmG family.

The protein resides in the cytoplasm. In terms of biological role, specifically methylates the N7 position of a guanine in 16S rRNA. In Christiangramia forsetii (strain DSM 17595 / CGMCC 1.15422 / KT0803) (Gramella forsetii), this protein is Ribosomal RNA small subunit methyltransferase G.